The following is a 225-amino-acid chain: Uracil-DNA glycosylase (225 aa).

The active-site Proton acceptor is D65.

Belongs to the uracil-DNA glycosylase (UDG) superfamily. UNG family.

The protein resides in the cytoplasm. It catalyses the reaction Hydrolyzes single-stranded DNA or mismatched double-stranded DNA and polynucleotides, releasing free uracil.. Excises uracil residues from the DNA which can arise as a result of misincorporation of dUMP residues by DNA polymerase or due to deamination of cytosine. The chain is Uracil-DNA glycosylase from Bacillus cytotoxicus (strain DSM 22905 / CIP 110041 / 391-98 / NVH 391-98).